The chain runs to 295 residues: Cyclin-G1 (295 aa).

It belongs to the cyclin family. Cyclin G subfamily.

It localises to the nucleus. Its function is as follows. May play a role in growth regulation. Is associated with G2/M phase arrest in response to DNA damage. May be an intermediate by which p53 mediates its role as an inhibitor of cellular proliferation. This chain is Cyclin-G1 (CCNG1), found in Pongo abelii (Sumatran orangutan).